A 195-amino-acid polypeptide reads, in one-letter code: Anthranilate synthase component 2 (195 aa).

A Glutamine amidotransferase type-1 domain is found at 1 to 195; that stretch reads MILIIDNYDS…LKNFLSLSYG (195 aa). 52–54 serves as a coordination point for L-glutamine; that stretch reads GPG. The Nucleophile; for GATase activity role is filled by C79. L-glutamine-binding positions include Q83 and 129 to 130; that span reads SL. Catalysis depends on residues H173 and E175.

Tetramer of two components I and two components II.

Its subcellular location is the plastid. The protein resides in the chloroplast. The catalysed reaction is chorismate + L-glutamine = anthranilate + pyruvate + L-glutamate + H(+). It participates in amino-acid biosynthesis; L-tryptophan biosynthesis; L-tryptophan from chorismate: step 1/5. The protein is Anthranilate synthase component 2 (trpG) of Cyanidium caldarium (Red alga).